The chain runs to 359 residues: Peroxisome assembly protein 12 (359 aa).

Topologically, residues 1 to 19 are peroxisomal matrix; sequence MAEHGAHFTAASVADDQPS. The helical transmembrane segment at 20 to 47 threads the bilayer; the sequence is IFEVVAQDSLMTAVRPALQHVVKVLAES. The Cytoplasmic segment spans residues 48–51; sequence NPTH. Residues 52-76 form a helical membrane-spanning segment; it reads YGFLWRWFDEIFTLLDLLLQQHYLS. Topologically, residues 77–109 are peroxisomal matrix; it reads RTSASFSENFYGLKRIVMGDTHKSQRLASAGLP. The chain crosses the membrane as a helical span at residues 110-139; that stretch reads KQQLWKSIMFLVLLPYLKVKLEKLVSSLRE. Residues 140–144 are Cytoplasmic-facing; it reads EDEYS. The helical transmembrane segment at 145–183 threads the bilayer; sequence IHPPSSRWKRFYRAFLAAYPFVNMAWEGWFLVQQLRYIL. Topologically, residues 184–249 are peroxisomal matrix; the sequence is GKAQHHSPLL…VGGVALSLST (66 aa). Residues 250-277 form a helical membrane-spanning segment; sequence GLSVGVFFLQFLDWWYSSENQETIKSLT. The Cytoplasmic portion of the chain corresponds to 278–359; the sequence is ALPTPPPPVH…HLIKLYSPEN (82 aa). Positions 304, 307, 325, and 328 each coordinate Zn(2+). The segment at 304 to 343 adopts an RING-type; degenerate zinc-finger fold; that stretch reads CPLCRKTRVNDTVLATSGYVFCYRCVFHYVRSHQACPITG.

The protein belongs to the pex2/pex10/pex12 family. Component of the PEX2-PEX10-PEX12 retrotranslocation channel, composed of PEX2, PEX10 and PEX12. Interacts with PEX19 via its cytoplasmic domain.

The protein localises to the peroxisome membrane. The protein operates within protein modification; protein ubiquitination. Its function is as follows. Component of a retrotranslocation channel required for peroxisome organization by mediating export of the PEX5 receptor from peroxisomes to the cytosol, thereby promoting PEX5 recycling. The retrotranslocation channel is composed of PEX2, PEX10 and PEX12; each subunit contributing transmembrane segments that coassemble into an open channel that specifically allows the passage of PEX5 through the peroxisomal membrane. PEX12 also regulates PEX5 recycling by activating the E3 ubiquitin-protein ligase activity of PEX10. When PEX5 recycling is compromised, PEX12 stimulates PEX10-mediated polyubiquitination of PEX5, leading to its subsequent degradation. This chain is Peroxisome assembly protein 12, found in Homo sapiens (Human).